Reading from the N-terminus, the 179-residue chain is Large ribosomal subunit protein uL6 (179 aa).

It belongs to the universal ribosomal protein uL6 family. As to quaternary structure, part of the 50S ribosomal subunit.

Functionally, this protein binds to the 23S rRNA, and is important in its secondary structure. It is located near the subunit interface in the base of the L7/L12 stalk, and near the tRNA binding site of the peptidyltransferase center. This is Large ribosomal subunit protein uL6 from Chlorobaculum tepidum (strain ATCC 49652 / DSM 12025 / NBRC 103806 / TLS) (Chlorobium tepidum).